Here is a 570-residue protein sequence, read N- to C-terminus: MPHETLLDNQGWFKKLARRFGPGHVVNTCFLIVMLFSTLLTWREVMILKDAYVASQRNHLGSVANVLDRQLQFNMDRLIFLRNGMHEALVAPLAFSALQSAVTQFEQRRVRHFWQLELDKRRTLPLYGVSDQFVARTTLLSRESRDLANELTATLELGYLARLARSSAMLTLETMYVSCSGFYLSTLPTAYGSDIVSRYYQYVTQPWFIEQSQRRNPQRGVRWFTSAQPYVADEQKKVTASLPLDHDNYWYGVLAMDIPVASLQRFLRDAAEKDIEGEYQLYDNHLRLLTDSAPEQQTANTLNDRERALLAREIEKDTLGGLRLGTHYVSWERLDHFDGVLLRVHTLREGIQGNFGSISIALTLLWVLFTAMLLISWGVIRHMVKNMFVLQNSLQWQAWHDPLTRLYNRGALFEKASRLAKRYREARQPFSVIQLDLDYFKSVNDRFGHQAGDRVLSHAAGLIGSTIRAHDIAGRVGGEEFCIVLPGATKAQALQIAERIRQRINDKEILVTKSTTLRISASMGISSAEEYGDYDFEQLQSLADKRLYYAKQSGRNRICASDATQEREKK.

2 helical membrane passes run 20 to 40 and 360 to 380; these read FGPGHVVNTCFLIVMLFSTLL and IALTLLWVLFTAMLLISWGVI. One can recognise a GGDEF domain in the interval 428 to 563; that stretch reads QPFSVIQLDL…GRNRICASDA (136 aa). D436 serves as a coordination point for Mg(2+). The substrate site is built by N444, H449, and D453. Mg(2+) is bound at residue E479. The active-site Proton acceptor is E479.

Homodimer. Requires Mg(2+) as cofactor.

Its subcellular location is the cell inner membrane. It catalyses the reaction 2 GTP = 3',3'-c-di-GMP + 2 diphosphate. It functions in the pathway glycan metabolism; bacterial cellulose biosynthesis. Its pathway is purine metabolism; 3',5'-cyclic di-GMP biosynthesis. In terms of biological role, catalyzes the synthesis of cyclic-di-GMP (c-di-GMP) via the condensation of 2 GTP molecules. Cyclic-di-GMP is a second messenger which controls cell surface-associated traits in bacteria. Involved in the regulation of cellulose production. This is Probable diguanylate cyclase DgcQ from Salmonella choleraesuis (strain SC-B67).